A 49-amino-acid chain; its full sequence is Cytochrome b559 subunit beta (49 aa).

A helical membrane pass occupies residues 24-40 (WLAVHVLGVPTVFFLGA). Histidine 28 is a heme binding site.

The protein belongs to the PsbE/PsbF family. Heterodimer of an alpha subunit and a beta subunit. PSII is composed of 1 copy each of membrane proteins PsbA, PsbB, PsbC, PsbD, PsbE, PsbF, PsbH, PsbI, PsbJ, PsbK, PsbL, PsbM, PsbT, PsbX, PsbY, Psb30/Ycf12, peripheral proteins PsbO, CyanoQ (PsbQ), PsbU, PsbV and a large number of cofactors. It forms dimeric complexes. Heme b is required as a cofactor.

It is found in the cellular thylakoid membrane. In terms of biological role, this b-type cytochrome is tightly associated with the reaction center of photosystem II (PSII). PSII is a light-driven water:plastoquinone oxidoreductase that uses light energy to abstract electrons from H(2)O, generating O(2) and a proton gradient subsequently used for ATP formation. It consists of a core antenna complex that captures photons, and an electron transfer chain that converts photonic excitation into a charge separation. The chain is Cytochrome b559 subunit beta from Prochlorococcus marinus (strain MIT 9303).